Consider the following 149-residue polypeptide: MRLHTLQPAPGAKSTRKRVGRGTSSGHGKTSGFGHKGQKARSGRVGKRGFEGGQTPLYKKLPKIMRFKNYPFKIEYEVVNVEKLNRFDSGTVVDIGTLVDTGLVSSLSAKVKILGQGEITKALQVKVHAISKSAKEKIEAAGGSVEVVD.

Residues methionine 1–glycine 53 are disordered. Gly residues predominate over residues threonine 23–histidine 35. The segment covering lysine 36–lysine 47 has biased composition (basic residues).

Belongs to the universal ribosomal protein uL15 family. In terms of assembly, part of the 50S ribosomal subunit.

In terms of biological role, binds to the 23S rRNA. The sequence is that of Large ribosomal subunit protein uL15 from Coprothermobacter proteolyticus (strain ATCC 35245 / DSM 5265 / OCM 4 / BT).